Reading from the N-terminus, the 289-residue chain is Leucine--tRNA ligase subunit beta (289 aa).

The 'KMSKS' region motif lies at 45-49 (KMSKS). Position 48 (K48) interacts with ATP.

The protein belongs to the class-I aminoacyl-tRNA synthetase family. As to quaternary structure, seems to consist of an alpha chain and a beta chain.

The protein resides in the cytoplasm. The catalysed reaction is tRNA(Leu) + L-leucine + ATP = L-leucyl-tRNA(Leu) + AMP + diphosphate. In Aquifex aeolicus (strain VF5), this protein is Leucine--tRNA ligase subunit beta (leuS').